We begin with the raw amino-acid sequence, 472 residues long: Argininosuccinate lyase (472 aa).

The protein belongs to the lyase 1 family. Argininosuccinate lyase subfamily.

It localises to the cytoplasm. It catalyses the reaction 2-(N(omega)-L-arginino)succinate = fumarate + L-arginine. It participates in amino-acid biosynthesis; L-arginine biosynthesis; L-arginine from L-ornithine and carbamoyl phosphate: step 3/3. The sequence is that of Argininosuccinate lyase from Syntrophus aciditrophicus (strain SB).